Reading from the N-terminus, the 123-residue chain is WAP four-disulfide core domain protein 5 (123 aa).

An N-terminal signal peptide occupies residues 1–24; sequence MRIQSLLLLGALLAVGSQLPAVFG. 2 consecutive WAP domains span residues 27-73 and 74-121; these read KGEK…CIPR and VSVK…RDPA. 8 disulfide bridges follow: cysteine 34–cysteine 62, cysteine 41–cysteine 66, cysteine 49–cysteine 61, cysteine 55–cysteine 70, cysteine 81–cysteine 109, cysteine 88–cysteine 113, cysteine 96–cysteine 108, and cysteine 102–cysteine 117.

The protein localises to the secreted. Putative acid-stable proteinase inhibitor. This is WAP four-disulfide core domain protein 5 (WFDC5) from Macaca mulatta (Rhesus macaque).